The chain runs to 513 residues: ATP synthase subunit alpha (513 aa).

169–176 (GDRQCGKT) lines the ATP pocket.

Belongs to the ATPase alpha/beta chains family. In terms of assembly, F-type ATPases have 2 components, CF(1) - the catalytic core - and CF(0) - the membrane proton channel. CF(1) has five subunits: alpha(3), beta(3), gamma(1), delta(1), epsilon(1). CF(0) has three main subunits: a(1), b(2) and c(9-12). The alpha and beta chains form an alternating ring which encloses part of the gamma chain. CF(1) is attached to CF(0) by a central stalk formed by the gamma and epsilon chains, while a peripheral stalk is formed by the delta and b chains.

It is found in the cell inner membrane. It catalyses the reaction ATP + H2O + 4 H(+)(in) = ADP + phosphate + 5 H(+)(out). Produces ATP from ADP in the presence of a proton gradient across the membrane. The alpha chain is a regulatory subunit. The chain is ATP synthase subunit alpha from Burkholderia vietnamiensis (strain G4 / LMG 22486) (Burkholderia cepacia (strain R1808)).